A 343-amino-acid polypeptide reads, in one-letter code: Homeobox-leucine zipper protein HOX16 (343 aa).

The segment at residues 74–133 (LPEKKRRLTPEQVHLLERSFEEENKLEPERKTELARKLGLQPRQVAVWFQNRRARWKTKQ) is a DNA-binding region (homeobox). The segment at 132 to 176 (KQLERDFDRLKASFDALRADHDALLQDNHRLHSQVMSLTEKLQEK) is leucine-zipper. Residues 218 to 239 (FEEQQEQQVKAEDRLSTGSGGS) form a disordered region.

This sequence belongs to the HD-ZIP homeobox family. Class I subfamily. As to expression, expressed in seedlings, stems, leaf sheaths and blades and panicles.

It localises to the nucleus. Probable transcription factor. In Oryza sativa subsp. japonica (Rice), this protein is Homeobox-leucine zipper protein HOX16 (HOX16).